The primary structure comprises 241 residues: Phycocyanobilin:ferredoxin oxidoreductase (241 aa).

This sequence belongs to the HY2 family.

It carries out the reaction (2R,3Z)-phycocyanobilin + 4 oxidized [2Fe-2S]-[ferredoxin] = biliverdin IXalpha + 4 reduced [2Fe-2S]-[ferredoxin] + 4 H(+). Catalyzes the four-electron reduction of biliverdin IX-alpha (2-electron reduction at both the A and D rings); the reaction proceeds via an isolatable 2-electron intermediate, 181,182-dihydrobiliverdin. In Prochlorococcus marinus (strain MIT 9301), this protein is Phycocyanobilin:ferredoxin oxidoreductase.